The sequence spans 482 residues: Putative metabolite transport protein YfiG (482 aa).

The Cytoplasmic segment spans residues 1 to 29 (MSTKKKEAVIGKESLAHKGLLRTITLVST). A helical transmembrane segment spans residues 30 to 50 (FGGLLFGYDTGVINGALPFMA). The Extracellular portion of the chain corresponds to 51–59 (TAGQLNLTP). A helical membrane pass occupies residues 60-80 (VTEGLVASSLLLGAAFGAMFG). Residues 81–92 (GRLSDRHGRRKT) lie on the Cytoplasmic side of the membrane. Residues 93-113 (ILYLALLFIAATLGCTFSPNA) form a helical membrane-spanning segment. Residues 114-120 (SVMIAFR) lie on the Extracellular side of the membrane. The chain crosses the membrane as a helical span at residues 121 to 141 (FLLGLAVGCASVTVPTFLAEI). The Cytoplasmic portion of the chain corresponds to 142–155 (SPAERRGRIVTQNE). The helical transmembrane segment at 156 to 176 (LMIVIGQLLAYTFNAIIGSTM) threads the bilayer. Residues 177-184 (GESANVWR) are Extracellular-facing. A helical membrane pass occupies residues 185 to 205 (YMLVIATLPAVVLWFGMLIVP). Residues 206–263 (ESPRWLAAKGRMGDALRVLRQIREDSQAQQEIKEIKHAIEGTAKKAGFHDFQEPWIRR) are Cytoplasmic-facing. The chain crosses the membrane as a helical span at residues 264–284 (ILFIGIGIAIVQQITGVNSIM). Over 285 to 301 (YYGTEILREAGFQTEAA) the chain is Extracellular. Residues 302–322 (LIGNIANGVISVIAVIFGIWL) traverse the membrane as a helical segment. Topologically, residues 323 to 331 (LGKVRRRPM) are cytoplasmic. 2 helical membrane passes run 332 to 352 (LIIG…LSIV) and 353 to 373 (LEGT…FLAF). The Cytoplasmic segment spans residues 374–400 (QQTAISTVTWLMLSEIFPMHVRGLGMG). The helical transmembrane segment at 401 to 421 (ISTFCLWTANFLIGFTFPILL) threads the bilayer. Residues 422–423 (NH) lie on the Extracellular side of the membrane. Residues 424 to 444 (IGMSATFFIFVAMNILAILFV) form a helical membrane-spanning segment. Over 445–482 (KKYVPETKGRSLEQLEHSFRQYGRRADQEIQNQTTHLS) the chain is Cytoplasmic.

It belongs to the major facilitator superfamily. Sugar transporter (TC 2.A.1.1) family.

It localises to the cell membrane. This is Putative metabolite transport protein YfiG (yfiG) from Bacillus subtilis (strain 168).